The following is a 248-amino-acid chain: UPF0246 protein FN1762 (248 aa).

It belongs to the UPF0246 family.

In Fusobacterium nucleatum subsp. nucleatum (strain ATCC 25586 / DSM 15643 / BCRC 10681 / CIP 101130 / JCM 8532 / KCTC 2640 / LMG 13131 / VPI 4355), this protein is UPF0246 protein FN1762.